A 161-amino-acid chain; its full sequence is Arachidonate 5-lipoxygenase-activating protein (161 aa).

Topologically, residues 1–8 (MDQEAVGN) are lumenal. Residues 9–30 (IVLLAIVTLISVVQNGFFAHKV) form a helical membrane-spanning segment. The Cytoplasmic portion of the chain corresponds to 31 to 52 (EHESKTHNGRSFQRTGTLAFER). A helical membrane pass occupies residues 53–77 (VYTANQNCVDAYPTFLVMLWSAGLL). Topologically, residues 78 to 80 (CSQ) are lumenal. A helical membrane pass occupies residues 81–102 (VPAAFAGLMYLFVRQKYFVGYL). Over 103-107 (GERTQ) the chain is Cytoplasmic. Residues 108 to 115 (STPGYIFG) lie within the membrane without spanning it. A helical transmembrane segment spans residues 116–128 (KRIILFLFAMSLA). Topologically, residues 129–161 (GILNYFFIALFGSDFENYIKTVTTTISPLLLIP) are lumenal.

It belongs to the MAPEG family. As to quaternary structure, homotrimer. Interacts with LTC4S and ALOX5.

Its subcellular location is the nucleus membrane. It is found in the endoplasmic reticulum membrane. Required for leukotriene biosynthesis by ALOX5 (5-lipoxygenase). Anchors ALOX5 to the membrane. Binds arachidonic acid, and could play an essential role in the transfer of arachidonic acid to ALOX5. Binds to MK-886, a compound that blocks the biosynthesis of leukotrienes. In Bos taurus (Bovine), this protein is Arachidonate 5-lipoxygenase-activating protein (ALOX5AP).